Here is a 252-residue protein sequence, read N- to C-terminus: Eukaryotic translation initiation factor 3 subunit K (252 aa).

Residues 46–225 (FDCYANLALL…VKVPTNKENE (180 aa)) form the PCI domain.

It belongs to the eIF-3 subunit K family. In terms of assembly, component of the eukaryotic translation initiation factor 3 (eIF-3) complex.

The protein localises to the cytoplasm. Component of the eukaryotic translation initiation factor 3 (eIF-3) complex, which is involved in protein synthesis of a specialized repertoire of mRNAs and, together with other initiation factors, stimulates binding of mRNA and methionyl-tRNAi to the 40S ribosome. The eIF-3 complex specifically targets and initiates translation of a subset of mRNAs involved in cell proliferation. The protein is Eukaryotic translation initiation factor 3 subunit K of Aspergillus terreus (strain NIH 2624 / FGSC A1156).